A 119-amino-acid polypeptide reads, in one-letter code: uncharacterized protein (119 aa).

The next 2 membrane-spanning stretches (helical) occupy residues 53–73 (AATI…SFLA) and 92–112 (FITH…WFLF).

The protein localises to the membrane. This is an uncharacterized protein from Saccharomyces cerevisiae (strain ATCC 204508 / S288c) (Baker's yeast).